We begin with the raw amino-acid sequence, 128 residues long: Sulfurtransferase TusD (128 aa).

Cysteine 78 (cysteine persulfide intermediate) is an active-site residue.

The protein belongs to the DsrE/TusD family. As to quaternary structure, heterohexamer, formed by a dimer of trimers. The hexameric TusBCD complex contains 2 copies each of TusB, TusC and TusD. The TusBCD complex interacts with TusE.

It is found in the cytoplasm. Its function is as follows. Part of a sulfur-relay system required for 2-thiolation of 5-methylaminomethyl-2-thiouridine (mnm(5)s(2)U) at tRNA wobble positions. Accepts sulfur from TusA and transfers it in turn to TusE. In Buchnera aphidicola subsp. Acyrthosiphon pisum (strain 5A), this protein is Sulfurtransferase TusD.